The following is a 203-amino-acid chain: A-type ATP synthase subunit E (203 aa).

Belongs to the V-ATPase E subunit family. In terms of assembly, has multiple subunits with at least A(3), B(3), C, D, E, F, H, I and proteolipid K(x).

The protein resides in the cell membrane. In terms of biological role, component of the A-type ATP synthase that produces ATP from ADP in the presence of a proton gradient across the membrane. This is A-type ATP synthase subunit E from Thermococcus sibiricus (strain DSM 12597 / MM 739).